Reading from the N-terminus, the 43-residue chain is Venom protein E2 (43 aa).

2 disulfide bridges follow: C3–C20 and C14–C39.

Expressed by the venom gland.

It is found in the secreted. Functionally, neurotoxin. Blocks muscular nicotinic acetylcholine receptors (nAChR). In Micrurus pyrrhocryptus (Coral snake), this protein is Venom protein E2.